The chain runs to 311 residues: tRNA (cytosine(49)-C(5))-methyltransferase (311 aa).

Residues 118-124, Asp-142, Asp-169, and Asp-186 contribute to the S-adenosyl-L-methionine site; that span reads AAAPGSK. The Nucleophile role is filled by Cys-239.

This sequence belongs to the class I-like SAM-binding methyltransferase superfamily. RsmB/NOP family. Forms a tripartite complex with archease and tRNA. Binds only the oligomeric forms of the archease.

Its subcellular location is the cytoplasm. The enzyme catalyses cytidine(49) in tRNA precursor + S-adenosyl-L-methionine = 5-methylcytidine(49) in tRNA precursor + S-adenosyl-L-homocysteine + H(+). With respect to regulation, substrate specificity and tendency to aggregate are influenced by archease. Catalyzes AdoMet-dependent formation of m5C in tRNA. In the presence of protein archease, specifically methylates the cytosine at position 49 (m5C49) of tRNA. In the absence of archease, catalyzes the formation of m5C at many locations in tRNAs or rRNAs. This Pyrococcus abyssi (strain GE5 / Orsay) protein is tRNA (cytosine(49)-C(5))-methyltransferase.